Consider the following 417-residue polypeptide: Serine hydroxymethyltransferase (417 aa).

Residues leucine 121 and 125 to 127 (GHL) contribute to the (6S)-5,6,7,8-tetrahydrofolate site. Position 229 is an N6-(pyridoxal phosphate)lysine (lysine 229). 355-357 (SPF) contributes to the (6S)-5,6,7,8-tetrahydrofolate binding site.

This sequence belongs to the SHMT family. In terms of assembly, homodimer. Pyridoxal 5'-phosphate is required as a cofactor.

The protein localises to the cytoplasm. The catalysed reaction is (6R)-5,10-methylene-5,6,7,8-tetrahydrofolate + glycine + H2O = (6S)-5,6,7,8-tetrahydrofolate + L-serine. It functions in the pathway one-carbon metabolism; tetrahydrofolate interconversion. The protein operates within amino-acid biosynthesis; glycine biosynthesis; glycine from L-serine: step 1/1. Its function is as follows. Catalyzes the reversible interconversion of serine and glycine with tetrahydrofolate (THF) serving as the one-carbon carrier. This reaction serves as the major source of one-carbon groups required for the biosynthesis of purines, thymidylate, methionine, and other important biomolecules. Also exhibits THF-independent aldolase activity toward beta-hydroxyamino acids, producing glycine and aldehydes, via a retro-aldol mechanism. The polypeptide is Serine hydroxymethyltransferase (Shewanella baltica (strain OS223)).